The following is a 72-amino-acid chain: Disintegrin cotiarin (72 aa).

One can recognise a Disintegrin domain in the interval 1–72; the sequence is EAGEECDCGA…SADCPRNRFH (72 aa). 6 disulfides stabilise this stretch: Cys-6-Cys-21, Cys-8-Cys-16, Cys-15-Cys-38, Cys-29-Cys-35, Cys-34-Cys-59, and Cys-47-Cys-66. Positions 51-53 match the Cell attachment site motif; it reads RGD. The tract at residues 51 to 72 is disordered; it reads RGDNPDDRCTGQSADCPRNRFH.

Belongs to the venom metalloproteinase (M12B) family. P-II subfamily. P-IIa sub-subfamily. Monomer. As to expression, expressed by the venom gland.

The protein localises to the secreted. Inhibits fibrinogen interaction with platelets. Acts by binding to alpha-IIb/beta-3 (ITGA2B/ITGB3) on the platelet surface and inhibits aggregation induced by ADP, thrombin, platelet-activating factor and collagen. The polypeptide is Disintegrin cotiarin (Bothrops cotiara (Cotiara)).